The chain runs to 348 residues: Holliday junction branch migration complex subunit RuvB (348 aa).

A compositionally biased stretch (low complexity) spans 1 to 10 (MAIVSSSSGR). The interval 1-37 (MAIVSSSSGRKPPRRPEALMDPQQAPEEVVSRPEDKL) is disordered. The large ATPase domain (RuvB-L) stretch occupies residues 13–198 (PRRPEALMDP…FGLIQRLEFY (186 aa)). Residues Leu37, Arg38, Gly79, Lys82, Thr83, Thr84, Arg188, Tyr198, and Arg235 each coordinate ATP. Position 83 (Thr83) interacts with Mg(2+). Residues 199-271 (GQGDLEAIVE…LVGEALSLHR (73 aa)) are small ATPAse domain (RuvB-S). A head domain (RuvB-H) region spans residues 274–348 (HRGLDASDRR…AARSHLAEAA (75 aa)). The DNA site is built by Arg329 and Arg334.

This sequence belongs to the RuvB family. Homohexamer. Forms an RuvA(8)-RuvB(12)-Holliday junction (HJ) complex. HJ DNA is sandwiched between 2 RuvA tetramers; dsDNA enters through RuvA and exits via RuvB. An RuvB hexamer assembles on each DNA strand where it exits the tetramer. Each RuvB hexamer is contacted by two RuvA subunits (via domain III) on 2 adjacent RuvB subunits; this complex drives branch migration. In the full resolvosome a probable DNA-RuvA(4)-RuvB(12)-RuvC(2) complex forms which resolves the HJ.

It is found in the cytoplasm. The catalysed reaction is ATP + H2O = ADP + phosphate + H(+). Functionally, the RuvA-RuvB-RuvC complex processes Holliday junction (HJ) DNA during genetic recombination and DNA repair, while the RuvA-RuvB complex plays an important role in the rescue of blocked DNA replication forks via replication fork reversal (RFR). RuvA specifically binds to HJ cruciform DNA, conferring on it an open structure. The RuvB hexamer acts as an ATP-dependent pump, pulling dsDNA into and through the RuvAB complex. RuvB forms 2 homohexamers on either side of HJ DNA bound by 1 or 2 RuvA tetramers; 4 subunits per hexamer contact DNA at a time. Coordinated motions by a converter formed by DNA-disengaged RuvB subunits stimulates ATP hydrolysis and nucleotide exchange. Immobilization of the converter enables RuvB to convert the ATP-contained energy into a lever motion, pulling 2 nucleotides of DNA out of the RuvA tetramer per ATP hydrolyzed, thus driving DNA branch migration. The RuvB motors rotate together with the DNA substrate, which together with the progressing nucleotide cycle form the mechanistic basis for DNA recombination by continuous HJ branch migration. Branch migration allows RuvC to scan DNA until it finds its consensus sequence, where it cleaves and resolves cruciform DNA. The chain is Holliday junction branch migration complex subunit RuvB from Synechococcus sp. (strain CC9605).